A 305-amino-acid chain; its full sequence is Glycine--tRNA ligase alpha subunit (305 aa).

This sequence belongs to the class-II aminoacyl-tRNA synthetase family. In terms of assembly, tetramer of two alpha and two beta subunits.

The protein resides in the cytoplasm. The catalysed reaction is tRNA(Gly) + glycine + ATP = glycyl-tRNA(Gly) + AMP + diphosphate. This chain is Glycine--tRNA ligase alpha subunit, found in Streptococcus pyogenes serotype M12 (strain MGAS2096).